The primary structure comprises 131 residues: Global transcriptional regulator Spx 2 (131 aa).

A disulfide bridge connects residues Cys10 and Cys13.

This sequence belongs to the ArsC family. Spx subfamily. Interacts with the C-terminal domain of the alpha subunit of the RNAP.

Its subcellular location is the cytoplasm. Global transcriptional regulator that plays a key role in stress response and exerts either positive or negative regulation of genes. Acts by interacting with the C-terminal domain of the alpha subunit of the RNA polymerase (RNAP). This interaction can enhance binding of RNAP to the promoter region of target genes and stimulate their transcription, or block interaction of RNAP with activator. In Bacillus anthracis, this protein is Global transcriptional regulator Spx 2.